Consider the following 868-residue polypeptide: Alanine--tRNA ligase (868 aa).

Residues His-555, His-559, Cys-657, and His-661 each contribute to the Zn(2+) site. A disordered region spans residues 828–847 (SQVGGKGGGRPDMAQAGGSE).

It belongs to the class-II aminoacyl-tRNA synthetase family. The cofactor is Zn(2+).

The protein localises to the cytoplasm. The enzyme catalyses tRNA(Ala) + L-alanine + ATP = L-alanyl-tRNA(Ala) + AMP + diphosphate. Its function is as follows. Catalyzes the attachment of alanine to tRNA(Ala) in a two-step reaction: alanine is first activated by ATP to form Ala-AMP and then transferred to the acceptor end of tRNA(Ala). Also edits incorrectly charged Ser-tRNA(Ala) and Gly-tRNA(Ala) via its editing domain. This Pseudoalteromonas translucida (strain TAC 125) protein is Alanine--tRNA ligase.